The chain runs to 875 residues: Protein SEY1 (875 aa).

Over 1–749 the chain is Cytoplasmic; the sequence is MVANGHFASN…KRSAIGGITQ (749 aa). Residues 49–307 enclose the GB1/RHD3-type G domain; sequence GFNYHLISVF…IPADGFAVYA (259 aa). 59–66 serves as a coordination point for GTP; the sequence is GSQSTGKS. Residues 482 to 506 adopt a coiled-coil conformation; sequence SNYQQELSLYQKDLERISGQLRRDE. Residues 676 to 704 form a disordered region; it reads LDKWIGHTPSSATPADEEDLTPIGGVDED. The span at 690 to 704 shows a compositional bias: acidic residues; sequence ADEEDLTPIGGVDED. Residues 750–770 traverse the membrane as a helical segment; the sequence is VPLYFYGLLLALGWNEIMAVL. The Lumenal portion of the chain corresponds to 771-773; it reads RNP. A helical membrane pass occupies residues 774-794; the sequence is AYFFLLFVCAIGAYVTYQLNL. Residues 795–875 lie on the Cytoplasmic side of the membrane; that stretch reads WGPIIKMTEA…ADDDDVDDDF (81 aa). The segment at 831 to 875 is disordered; sequence MAMSGARNATEEHEMSNLNRKSGERGGQKYRGEDVADDDDVDDDF. Positions 839 to 864 are enriched in basic and acidic residues; sequence ATEEHEMSNLNRKSGERGGQKYRGED. Over residues 865 to 875 the composition is skewed to acidic residues; sequence VADDDDVDDDF.

The protein belongs to the TRAFAC class dynamin-like GTPase superfamily. GB1/RHD3 GTPase family. RHD3 subfamily.

The protein localises to the endoplasmic reticulum membrane. Cooperates with the reticulon proteins and tubule-shaping DP1 family proteins to generate and maintain the structure of the tubular endoplasmic reticulum network. Has GTPase activity, which is required for its function in ER organization. This Ajellomyces dermatitidis (strain ER-3 / ATCC MYA-2586) (Blastomyces dermatitidis) protein is Protein SEY1.